The following is a 415-amino-acid chain: Tyrosine--tRNA ligase (415 aa).

A 'HIGH' region motif is present at residues 54 to 63; sequence PTGRDIHLGH. A 'KMSKS' region motif is present at residues 248-252; the sequence is KMSKS. An ATP-binding site is contributed by Lys-251. The S4 RNA-binding domain maps to 351 to 415; that stretch reads AKAFYLLSAI…GKKTFRRLTR (65 aa).

It belongs to the class-I aminoacyl-tRNA synthetase family. TyrS type 2 subfamily. Homodimer.

It localises to the cytoplasm. It carries out the reaction tRNA(Tyr) + L-tyrosine + ATP = L-tyrosyl-tRNA(Tyr) + AMP + diphosphate + H(+). In terms of biological role, catalyzes the attachment of tyrosine to tRNA(Tyr) in a two-step reaction: tyrosine is first activated by ATP to form Tyr-AMP and then transferred to the acceptor end of tRNA(Tyr). This Prochlorococcus marinus (strain MIT 9313) protein is Tyrosine--tRNA ligase.